Here is a 274-residue protein sequence, read N- to C-terminus: 4-diphosphocytidyl-2-C-methyl-D-erythritol kinase (274 aa).

The active site involves Lys8. Residue 94–104 (PSGAGLGGGSS) coordinates ATP. Residue Asp136 is part of the active site.

This sequence belongs to the GHMP kinase family. IspE subfamily.

The enzyme catalyses 4-CDP-2-C-methyl-D-erythritol + ATP = 4-CDP-2-C-methyl-D-erythritol 2-phosphate + ADP + H(+). The protein operates within isoprenoid biosynthesis; isopentenyl diphosphate biosynthesis via DXP pathway; isopentenyl diphosphate from 1-deoxy-D-xylulose 5-phosphate: step 3/6. Functionally, catalyzes the phosphorylation of the position 2 hydroxy group of 4-diphosphocytidyl-2C-methyl-D-erythritol. In Bacteroides thetaiotaomicron (strain ATCC 29148 / DSM 2079 / JCM 5827 / CCUG 10774 / NCTC 10582 / VPI-5482 / E50), this protein is 4-diphosphocytidyl-2-C-methyl-D-erythritol kinase.